Here is a 736-residue protein sequence, read N- to C-terminus: MKFSRFIPRSRTPGLPAYGEQEPNTFENGYRPSPPPGAITPYLGLRSRLSQIWFNRWTILLLLILARVLVAIGSLDGNLVSAKREALSACSSVESVGSTMASMPHYMAQGVNELTATGVEKAINGLMSMLELTVTGVEEIFVFFVNVMTQTYLCLITLVVSGMMNAAIDVLKKATEFLDDITGKLGNAIGDGISDFEDAINGFGDVINMFGTKLPKLNLDGPIKELENLSLPDGLTDDLNKLKEKIPNFEDVNNFTNNALRMPFELVKKLIRDEIDDYKFDRSVFPVPAKEQLQFCNEEGGIHSFFNKLASLTSTAKKIFIGVLVVSAILVCIPMAYREMRAWRGMKERSSLVRREAHDPMDVVYIVSRPFASAAGLKAATWFSGHRRQVLARWVVAYVTSPPALFLLSLGVAGLFSCACQAMLLTAVKKEVPSLTEQVGQFADKVFFALNNASEQWAVGTNRVIDDTNDDINQKVFGWVNQTTGSVNNTLNVFVDETSNVLNRTFGGTILYEPIKDVLHCLIGLKIEGVQKALTWVSVHAKVDFPNLANDTFSLRTLEKLSKDNDSNADSFLMNPGDKTTDKISEVVQRVTDSVESGIRTEAIISAVIISIWFAVLLMAIVRALTLWYGADKNRGDGSGDSEFPHPETLSRDAAGFSDIPLATPTHVSPGMADTSVPVYTTRPPAQAFNGGYNAEDYYQEQKLGFAGQRELRRDVEGHARKSSYGEVEYTNDVKR.

Positions 1-33 (MKFSRFIPRSRTPGLPAYGEQEPNTFENGYRPS) are disordered. Residues 1-56 (MKFSRFIPRSRTPGLPAYGEQEPNTFENGYRPSPPPGAITPYLGLRSRLSQIWFNR) lie on the Extracellular side of the membrane. The chain crosses the membrane as a helical span at residues 57–77 (WTILLLLILARVLVAIGSLDG). Residues 78–139 (NLVSAKREAL…LELTVTGVEE (62 aa)) are Cytoplasmic-facing. Residues 140–160 (IFVFFVNVMTQTYLCLITLVV) form a helical membrane-spanning segment. Over 161 to 315 (SGMMNAAIDV…FNKLASLTST (155 aa)) the chain is Extracellular. 2 N-linked (GlcNAc...) asparagine glycosylation sites follow: N228 and N254. Residues 316-336 (AKKIFIGVLVVSAILVCIPMA) traverse the membrane as a helical segment. At 337–395 (YREMRAWRGMKERSSLVRREAHDPMDVVYIVSRPFASAAGLKAATWFSGHRRQVLARWV) the chain is on the cytoplasmic side. The chain crosses the membrane as a helical span at residues 396–416 (VAYVTSPPALFLLSLGVAGLF). Topologically, residues 417-601 (SCACQAMLLT…TDSVESGIRT (185 aa)) are extracellular. N-linked (GlcNAc...) asparagine glycans are attached at residues N452, N481, N488, N503, N550, and N565. The helical transmembrane segment at 602–622 (EAIISAVIISIWFAVLLMAIV) threads the bilayer. Over 623 to 736 (RALTLWYGAD…EVEYTNDVKR (114 aa)) the chain is Cytoplasmic. Positions 717–736 (EGHARKSSYGEVEYTNDVKR) are disordered.

Belongs to the PRM1 family.

The protein resides in the cell membrane. In terms of biological role, involved in cell fusion during mating by stabilizing the plasma membrane fusion event. This chain is Plasma membrane fusion protein PRM1 (PRM1), found in Ajellomyces capsulatus (strain NAm1 / WU24) (Darling's disease fungus).